We begin with the raw amino-acid sequence, 234 residues long: Elongation factor Tu, chloroplastic (234 aa).

The tr-type G domain maps to 1-125 (KNMITGAAQM…KVDSYIPTPE (125 aa)). GTP is bound at residue 47–50 (NKQD).

It belongs to the TRAFAC class translation factor GTPase superfamily. Classic translation factor GTPase family. EF-Tu/EF-1A subfamily.

The protein resides in the plastid. The protein localises to the chloroplast. The enzyme catalyses GTP + H2O = GDP + phosphate + H(+). Functionally, GTP hydrolase that promotes the GTP-dependent binding of aminoacyl-tRNA to the A-site of ribosomes during protein biosynthesis. This chain is Elongation factor Tu, chloroplastic (tufA), found in Pandorina morum (Freshwater green alga).